The sequence spans 568 residues: Kelch-like protein 12 (568 aa).

The BTB domain maps to 33-100; that stretch reads CDVTLRVEQK…VYTETVHVTV (68 aa). The region spanning 135–236 is the BACK domain; that stretch reads CLGIRDFAET…LTPRYITDVI (102 aa). Kelch repeat units lie at residues 282-329, 331-379, 380-426, 427-473, 474-520, and 522-567; these read VLLV…SLHD, IYVI…TLGD, MIYV…VASG, VIYC…LLND, HIYV…VLRG, and LYAI…ALRE.

As to quaternary structure, component of the BCR(KLHL12) E3 ubiquitin ligase complex, at least composed of CUL3 and KLHL12 and RBX1. This complex interacts with DVL3 upon activation of the Wnt signaling pathway by WNT3A. Interacts with DRD4, KLHL2 and SEC31A. Interacts with PEF1 and PDCD6/ALG-2; interaction takes place in response to cytosolic calcium increase and leads to bridge together the BCR(KLHL12) complex and SEC31 (SEC31A or SEC31B). Ubiquitinated by the SCF(FBXL17) complex, leading to its degradation by the proteasome: ubiquitination by the SCF(FBXL17) complex takes place when aberrant BTB domain dimers are formed.

It is found in the cytoplasmic vesicle. The protein resides in the COPII-coated vesicle. The protein operates within protein modification; protein ubiquitination. Substrate-specific adapter of a BCR (BTB-CUL3-RBX1) E3 ubiquitin ligase complex that acts as a negative regulator of Wnt signaling pathway and ER-Golgi transport. The BCR(KLHL12) complex is involved in ER-Golgi transport by regulating the size of COPII coats, thereby playing a key role in collagen export, which is required for embryonic stem (ES) cells division: BCR(KLHL12) acts by mediating monoubiquitination of SEC31 (SEC31A or SEC31B). The BCR(KLHL12) complex is also involved in neural crest specification: in response to cytosolic calcium increase, interacts with the heterodimer formed with PEF1 and PDCD6/ALG-2, leading to bridge together the BCR(KLHL12) complex and SEC31 (SEC31A or SEC31B), promoting monoubiquitination of SEC31 and subsequent collagen export. As part of the BCR(KLHL12) complex, also acts as a negative regulator of the Wnt signaling pathway by mediating ubiquitination and subsequent proteolysis of DVL3. The BCR(KLHL12) complex also mediates polyubiquitination of DRD4 and PEF1, without leading to degradation of these proteins. The sequence is that of Kelch-like protein 12 (KLHL12) from Bos taurus (Bovine).